Consider the following 344-residue polypeptide: Methionine import ATP-binding protein MetN 1 (344 aa).

The ABC transporter domain occupies 2–241 (IEIRNISQRF…PHHEVTRALI (240 aa)). ATP is bound at residue 38 to 45 (GRSGAGKS).

It belongs to the ABC transporter superfamily. Methionine importer (TC 3.A.1.24) family. In terms of assembly, the complex is composed of two ATP-binding proteins (MetN), two transmembrane proteins (MetI) and a solute-binding protein (MetQ).

The protein resides in the cell inner membrane. It carries out the reaction L-methionine(out) + ATP + H2O = L-methionine(in) + ADP + phosphate + H(+). The catalysed reaction is D-methionine(out) + ATP + H2O = D-methionine(in) + ADP + phosphate + H(+). Functionally, part of the ABC transporter complex MetNIQ involved in methionine import. Responsible for energy coupling to the transport system. This chain is Methionine import ATP-binding protein MetN 1, found in Paraburkholderia xenovorans (strain LB400).